The primary structure comprises 431 residues: Saglin (431 aa).

The N-terminal stretch at 1–39 is a signal peptide; that stretch reads MSVRDYSGVQVISSRKHRSMSRLPTVLLLLASAAVLAAG. A glycan (N-linked (GlcNAc...) asparagine) is linked at Asn95. Residues 120 to 169 adopt a coiled-coil conformation; that stretch reads LDDAQRQMEQEHRQYAATLEEQLHAAQQETQQEQEMKKALQKQLDALTDS.

Homodimer. Female salivary gland (at protein level). Not detected in female carcass without salivary glands, midgut and hemolymph (at protein level). Probably not expressed in male tissues.

It localises to the secreted. Its function is as follows. (Microbial infection) Facilitates efficient midgut colonization by Plasmodium berghei parasites. Promotes successful transmission of Plasmodium berghei at low infection densities. (Microbial infection) Facilitates efficient midgut colonization by Plasmodium falciparum. The sequence is that of Saglin from Anopheles coluzzii (African malaria mosquito).